The chain runs to 950 residues: Calcium-transporting ATPase 1 (950 aa).

Serine 2 is modified (N-acetylserine). Over 2–92 (SDNPFNASLL…SLFKKFLSNF (91 aa)) the chain is Cytoplasmic. Residues 93–111 (IEDRMILLLIGSAVVSLFM) form a helical membrane-spanning segment. The Lumenal portion of the chain corresponds to 112–116 (GNIDD). The chain crosses the membrane as a helical span at residues 117 to 133 (AVSITLAIFIVVTVGFV). The Cytoplasmic segment spans residues 134–288 (QEYRSEKSLE…LQLTMDKLGK (155 aa)). At serine 227 the chain carries Phosphoserine. A helical membrane pass occupies residues 289 to 309 (DLSLVSFIVIGMICLVGIIQG). At 310-323 (RSWLEMFQISVSLA) the chain is on the lumenal side. Residues 324 to 344 (VAAIPEGLPIIVTVTLALGVL) traverse the membrane as a helical segment. Residues 345–814 (RMAKRKAIVR…KILTHDVMKR (470 aa)) are Cytoplasmic-facing. Catalysis depends on aspartate 371, which acts as the 4-aspartylphosphate intermediate. Residues 815-835 (LLTTAACIIVGTVYIFVKEMA) traverse the membrane as a helical segment. Residues 836 to 844 (EDGKVTARD) lie on the Lumenal side of the membrane. Residues 845–862 (TTMTFTCFVFFDMFNALA) form a helical membrane-spanning segment. Residues 863–884 (CRHNTKSIFEIGFFTNKMFNYA) are Cytoplasmic-facing. A helical membrane pass occupies residues 885–905 (VGLSLLGQMCAIYIPFFQSIF). The Lumenal portion of the chain corresponds to 906–909 (KTEK). A helical membrane pass occupies residues 910 to 930 (LGISDILLLLLISSSVFIVDE). At 931-950 (LRKLWTRKKNEEDSTYFSNV) the chain is on the cytoplasmic side.

It belongs to the cation transport ATPase (P-type) (TC 3.A.3) family.

It localises to the golgi apparatus membrane. It carries out the reaction Ca(2+)(in) + ATP + H2O = Ca(2+)(out) + ADP + phosphate + H(+). This magnesium-dependent enzyme catalyzes the hydrolysis of ATP coupled with the transport of calcium. Has a role in the secretory pathway. The sequence is that of Calcium-transporting ATPase 1 (PMR1) from Saccharomyces cerevisiae (strain ATCC 204508 / S288c) (Baker's yeast).